Consider the following 360-residue polypeptide: Cytochrome b-c1 complex subunit 2, mitochondrial (360 aa).

The transit peptide at 1–15 directs the protein to the mitochondrion; sequence MLSSRLQFAQQTARK.

This sequence belongs to the peptidase M16 family. UQCRC2/QCR2 subfamily. Component of the ubiquinol-cytochrome c oxidoreductase (cytochrome b-c1 complex, complex III, CIII), a multisubunit enzyme composed of 3 respiratory subunits cytochrome b, cytochrome c1 and Rieske protein, 2 core protein subunits, and additional low-molecular weight protein subunits. The complex exists as an obligatory dimer and forms supercomplexes (SCs) in the inner mitochondrial membrane with cytochrome c oxidase (complex IV, CIV).

The protein localises to the mitochondrion inner membrane. In terms of biological role, component of the ubiquinol-cytochrome c oxidoreductase, a multisubunit transmembrane complex that is part of the mitochondrial electron transport chain which drives oxidative phosphorylation. The respiratory chain contains 3 multisubunit complexes succinate dehydrogenase (complex II, CII), ubiquinol-cytochrome c oxidoreductase (cytochrome b-c1 complex, complex III, CIII) and cytochrome c oxidase (complex IV, CIV), that cooperate to transfer electrons derived from NADH and succinate to molecular oxygen, creating an electrochemical gradient over the inner membrane that drives transmembrane transport and the ATP synthase. The cytochrome b-c1 complex catalyzes electron transfer from ubiquinol to cytochrome c, linking this redox reaction to translocation of protons across the mitochondrial inner membrane, with protons being carried across the membrane as hydrogens on the quinol. In the process called Q cycle, 2 protons are consumed from the matrix, 4 protons are released into the intermembrane space and 2 electrons are passed to cytochrome c. The chain is Cytochrome b-c1 complex subunit 2, mitochondrial (QCR2) from Kluyveromyces lactis (strain ATCC 8585 / CBS 2359 / DSM 70799 / NBRC 1267 / NRRL Y-1140 / WM37) (Yeast).